Reading from the N-terminus, the 266-residue chain is uncharacterized protein (266 aa).

The first 22 residues, 1 to 22 (MGYLKRLVLYIVIMVMSVFIIG), serve as a signal peptide directing secretion. A lipid anchor (N-palmitoyl cysteine) is attached at Cys23. The S-diacylglycerol cysteine moiety is linked to residue Cys23.

Belongs to the staphylococcal tandem lipoprotein family.

It localises to the cell membrane. This is an uncharacterized protein from Staphylococcus aureus (strain USA300).